The chain runs to 152 residues: MFRGLNPIAVDAKGRIAIPARYREPIESEADGILVVTIDTEERCLLIYTHPQWEQIEQKLENLPSYHPASRRIQRLLIGHATEVELDRSGRILIPPVLREYAGLGSMVMLVGQGKKFELWGKSQWETAREDWLAEELPKGDDLPPELRSLSL.

SpoVT-AbrB domains are found at residues 5–52 and 81–124; these read LNPI…THPQ and ATEV…GKSQ.

It belongs to the MraZ family. Forms oligomers.

The protein resides in the cytoplasm. Its subcellular location is the nucleoid. The chain is Transcriptional regulator MraZ from Coxiella burnetii (strain Dugway 5J108-111).